We begin with the raw amino-acid sequence, 94 residues long: MSNEIVDKLYKVILDRIEKRPTGSYTVEIVNKGKAYVARKVGEESVETIVASLAENKERFISEVADLIYHLLVLMALEGVTPDDIYRELERRRK.

Belongs to the PRA-PH family.

The protein resides in the cytoplasm. It carries out the reaction 1-(5-phospho-beta-D-ribosyl)-ATP + H2O = 1-(5-phospho-beta-D-ribosyl)-5'-AMP + diphosphate + H(+). Its pathway is amino-acid biosynthesis; L-histidine biosynthesis; L-histidine from 5-phospho-alpha-D-ribose 1-diphosphate: step 2/9. The sequence is that of Phosphoribosyl-ATP pyrophosphatase from Saccharolobus islandicus (strain M.16.27) (Sulfolobus islandicus).